Reading from the N-terminus, the 350-residue chain is MPVLHNRISNDELKAKMLAESEPRTTISFYKYFTIASPQQTRDALYQVFTALDVFGRVYLAHEGINAQISVPQSKVETFRQQLYTFDPALDGLRLNIALEDDGKSFWVLRMKVRDRIVADGIDDPTFDASNVGDYLKAADVNAMLDDPDAVFIDMRNHYEYEVGHFENALEIPADTFREQLPKAVEMLREHADKKIVMYCTGGIRCEKASAWMKHNGFNKVWHIEGGIIEYARRAREQGLPVRFIGKNFVFDERMGERISDEVIAHCHQCGAPCDSHTNCKNDGCHLLFIQCPKCASKFNGCCSEQCCEELALPEEEQRRRRAGRENGNKIFNKSRGRLNSKLSIPDPAE.

The region spanning 146–240 (DDPDAVFIDM…YARRAREQGL (95 aa)) is the Rhodanese domain. Residue Cys-200 is the Cysteine persulfide intermediate of the active site. Residues 319–328 (RRRRAGRENG) show a composition bias toward basic and acidic residues. A disordered region spans residues 319–350 (RRRRAGRENGNKIFNKSRGRLNSKLSIPDPAE).

This sequence belongs to the TrhO family.

The catalysed reaction is uridine(34) in tRNA + AH2 + O2 = 5-hydroxyuridine(34) in tRNA + A + H2O. Catalyzes oxygen-dependent 5-hydroxyuridine (ho5U) modification at position 34 in tRNAs. The polypeptide is tRNA uridine(34) hydroxylase (Salmonella gallinarum (strain 287/91 / NCTC 13346)).